A 470-amino-acid polypeptide reads, in one-letter code: Dynein axonemal assembly factor 11 (470 aa).

4 LRR repeats span residues 20–43 (IFSLEEISLHQQDLERIEYIDKWC), 44–65 (RELKILYLQNNLIGKIENVSKL), 66–89 (KKLEYLNLALNNIEKIENLEGCES), and 90–110 (LQKLDLTVNFVGDLSSINSLQ). Residues 128–146 (YEGYRQYVVATLPQLKWLD) enclose the LRRCT domain. Residues 177-288 (LRKRAAEREK…NRSEEELKKK (112 aa)) adopt a coiled-coil conformation. A disordered region spans residues 182–265 (AEREKATNNL…SQYTPESRLE (84 aa)). The span at 194–213 (KQKEGRKAQEKKPGFDRRWY) shows a compositional bias: basic and acidic residues. In terms of domain architecture, CS spans 303 to 395 (VNESKLDFSL…TEMIQTKRAK (93 aa)). The disordered stretch occupies residues 447–470 (HRNSARDTADSEDFIDNAEVPPLV).

It belongs to the tilB family.

Its subcellular location is the cytoplasm. It localises to the cell projection. It is found in the cilium. The protein resides in the dynein axonemal particle. The protein localises to the flagellum. Functionally, involved in dynein arm assembly, is important for expression and transporting outer dynein arm (ODA) proteins from the cytoplasm to the cilia. The chain is Dynein axonemal assembly factor 11 (dnaaf11) from Xenopus tropicalis (Western clawed frog).